Here is a 487-residue protein sequence, read N- to C-terminus: Malonate-semialdehyde dehydrogenase (487 aa).

NAD(+) contacts are provided by Ala150, Phe152, Lys176, Glu179, Arg180, Ser229, and Thr251. The Nucleophile role is filled by Cys284. Residue Glu382 coordinates NAD(+).

It belongs to the aldehyde dehydrogenase family. IolA subfamily. As to quaternary structure, homotetramer.

The catalysed reaction is 3-oxopropanoate + NAD(+) + CoA + H2O = hydrogencarbonate + acetyl-CoA + NADH + H(+). It carries out the reaction 2-methyl-3-oxopropanoate + NAD(+) + CoA + H2O = propanoyl-CoA + hydrogencarbonate + NADH + H(+). The protein operates within polyol metabolism; myo-inositol degradation into acetyl-CoA; acetyl-CoA from myo-inositol: step 7/7. Its function is as follows. Catalyzes the oxidation of malonate semialdehyde (MSA) and methylmalonate semialdehyde (MMSA) into acetyl-CoA and propanoyl-CoA, respectively. Is involved in a myo-inositol catabolic pathway. Bicarbonate, and not CO2, is the end-product of the enzymatic reaction. In Bacillus subtilis (strain 168), this protein is Malonate-semialdehyde dehydrogenase.